The primary structure comprises 127 residues: Aspartate 1-decarboxylase (127 aa).

Residue S25 is the Schiff-base intermediate with substrate; via pyruvic acid of the active site. S25 is subject to Pyruvic acid (Ser). A substrate-binding site is contributed by T57. Y58 functions as the Proton donor in the catalytic mechanism. 73 to 75 (GAA) contacts substrate.

It belongs to the PanD family. As to quaternary structure, heterooctamer of four alpha and four beta subunits. Requires pyruvate as cofactor. Post-translationally, is synthesized initially as an inactive proenzyme, which is activated by self-cleavage at a specific serine bond to produce a beta-subunit with a hydroxyl group at its C-terminus and an alpha-subunit with a pyruvoyl group at its N-terminus.

The protein resides in the cytoplasm. The catalysed reaction is L-aspartate + H(+) = beta-alanine + CO2. The protein operates within cofactor biosynthesis; (R)-pantothenate biosynthesis; beta-alanine from L-aspartate: step 1/1. Its function is as follows. Catalyzes the pyruvoyl-dependent decarboxylation of aspartate to produce beta-alanine. The sequence is that of Aspartate 1-decarboxylase from Listeria monocytogenes serotype 4b (strain CLIP80459).